We begin with the raw amino-acid sequence, 293 residues long: Diaminopimelate epimerase (293 aa).

Substrate-binding residues include N17, Q47, and N67. C76 acts as the Proton donor in catalysis. Substrate is bound by residues 77-78 (GN), N164, N197, and 215-216 (ER). C224 functions as the Proton acceptor in the catalytic mechanism. Residue 225–226 (GS) participates in substrate binding.

Belongs to the diaminopimelate epimerase family. As to quaternary structure, homodimer.

The protein localises to the cytoplasm. The enzyme catalyses (2S,6S)-2,6-diaminopimelate = meso-2,6-diaminopimelate. The protein operates within amino-acid biosynthesis; L-lysine biosynthesis via DAP pathway; DL-2,6-diaminopimelate from LL-2,6-diaminopimelate: step 1/1. Functionally, catalyzes the stereoinversion of LL-2,6-diaminopimelate (L,L-DAP) to meso-diaminopimelate (meso-DAP), a precursor of L-lysine and an essential component of the bacterial peptidoglycan. This chain is Diaminopimelate epimerase, found in Rhodopseudomonas palustris (strain TIE-1).